Consider the following 420-residue polypeptide: Gamma-glutamyl phosphate reductase (420 aa).

This sequence belongs to the gamma-glutamyl phosphate reductase family.

The protein localises to the cytoplasm. It carries out the reaction L-glutamate 5-semialdehyde + phosphate + NADP(+) = L-glutamyl 5-phosphate + NADPH + H(+). It functions in the pathway amino-acid biosynthesis; L-proline biosynthesis; L-glutamate 5-semialdehyde from L-glutamate: step 2/2. Functionally, catalyzes the NADPH-dependent reduction of L-glutamate 5-phosphate into L-glutamate 5-semialdehyde and phosphate. The product spontaneously undergoes cyclization to form 1-pyrroline-5-carboxylate. This Cereibacter sphaeroides (strain KD131 / KCTC 12085) (Rhodobacter sphaeroides) protein is Gamma-glutamyl phosphate reductase.